The following is a 542-amino-acid chain: L-ornithine N(5)-monooxygenase (542 aa).

FAD contacts are provided by residues glutamate 45–histidine 53 and glutamine 64. Lysine 69 is a substrate binding site. Residue serine 218–serine 221 participates in NADP(+) binding. Residues asparagine 263–phenylalanine 266 and asparagine 294 contribute to the substrate site. Asparagine 294–serine 296 is an NADP(+) binding site. Residues phenylalanine 443–proline 472 are disordered. Residues serine 447–proline 472 are compositionally biased toward low complexity. Residue threonine 518–leucine 520 coordinates FAD. Serine 521 is a substrate binding site.

This sequence belongs to the lysine N(6)-hydroxylase/L-ornithine N(5)-oxygenase family. As to quaternary structure, homotetramer. It depends on FAD as a cofactor.

It catalyses the reaction L-ornithine + NADPH + O2 = N(5)-hydroxy-L-ornithine + NADP(+) + H2O. It carries out the reaction L-ornithine + NADH + O2 = N(5)-hydroxy-L-ornithine + NAD(+) + H2O. Its pathway is siderophore biosynthesis. Functionally, L-ornithine N(5)-monooxygenase; part of the gene cluster that mediates the biosynthesis of coprinoferrin, an acylated tripeptide hydroxamate siderophore. The biosynthesis of coprinoferrin depends on the hydroxylation of ornithine to N(5)-hydroxyornithine, catalyzed by the monooxygenase cpf2. The second step, the acylation of N(5)-hydroxy-L-ornithine to yield N(5)-hexanoyl-N(5)-hydroxyl-L-ornithine is catalyzed by a not yet identified acyltransferase. Finally, assembly of coprinoferrin is catalyzed by the nonribosomal peptide synthase (NRPS) cpf1 via amide bond formation between three N(5)-hexanoyl-N(5)-hydroxyl-L-ornithine molecules to release the linear trimer. Interestingly, proteins seemingly not directly related to biosynthesis, such as transcription factors, replication factors, and autophagy-related proteins, are conserved among the clusters homologous to the coprinoferrin cluster, suggesting that the cluster may also play developmental and cell biological functions. The sequence is that of L-ornithine N(5)-monooxygenase from Coprinopsis cinerea (strain Okayama-7 / 130 / ATCC MYA-4618 / FGSC 9003) (Inky cap fungus).